We begin with the raw amino-acid sequence, 37 residues long: Cytochrome b6-f complex subunit 5 (37 aa).

A helical membrane pass occupies residues 5–25 (LLCGIVLGLIPITLAGLFMAA).

The protein belongs to the PetG family. The 4 large subunits of the cytochrome b6-f complex are cytochrome b6, subunit IV (17 kDa polypeptide, PetD), cytochrome f and the Rieske protein, while the 4 small subunits are PetG, PetL, PetM and PetN. The complex functions as a dimer.

The protein resides in the cellular thylakoid membrane. Functionally, component of the cytochrome b6-f complex, which mediates electron transfer between photosystem II (PSII) and photosystem I (PSI), cyclic electron flow around PSI, and state transitions. PetG is required for either the stability or assembly of the cytochrome b6-f complex. This Synechococcus elongatus (strain ATCC 33912 / PCC 7942 / FACHB-805) (Anacystis nidulans R2) protein is Cytochrome b6-f complex subunit 5.